The sequence spans 755 residues: Periplasmic nitrate reductase (755 aa).

A signal peptide (tat-type signal) is located at residues 1–32 (MSTSRRDFLKYFAMSAAVAAASGAGFGSLALA). The 56-residue stretch at 38-93 (EKWVKGVCRYCGTGCGVLVGVKDGKAVAIQGDPNNHNAGLLCLKGSLLIPVLNSKE) folds into the 4Fe-4S Mo/W bis-MGD-type domain. Positions 45, 48, 52, and 79 each coordinate [4Fe-4S] cluster. Residues Lys-81, Gln-143, Asn-168, Cys-172, 208–212 (NTSEA), 236–238 (DPR), 255–257 (GTD), Met-340, Gln-344, Asn-450, 475–477 (IEA), and 647–656 (SMRVIDHWHT) each bind Mo-bis(molybdopterin guanine dinucleotide). Substrate is bound by residues 648 to 653 (MRVIDH) and Phe-721. Asn-729 and Lys-746 together coordinate Mo-bis(molybdopterin guanine dinucleotide).

It belongs to the prokaryotic molybdopterin-containing oxidoreductase family. NasA/NapA/NarB subfamily. Monomer. Component of the periplasmic nitrate reductase NapAB complex composed of NapA and NapB. Requires [4Fe-4S] cluster as cofactor. The cofactor is Mo-bis(molybdopterin guanine dinucleotide). Predicted to be exported by the Tat system. The position of the signal peptide cleavage has been experimentally proven.

The protein localises to the periplasm. The enzyme catalyses 2 Fe(II)-[cytochrome] + nitrate + 2 H(+) = 2 Fe(III)-[cytochrome] + nitrite + H2O. Its activity is regulated as follows. Activated by potassium and sodium ions and inhibited by magnesium and calcium ions. In terms of biological role, catalytic subunit of the periplasmic nitrate reductase complex NapAB. Receives electrons from NapB and catalyzes the reduction of nitrate to nitrite. In Desulfovibrio desulfuricans (strain ATCC 27774 / DSM 6949 / MB), this protein is Periplasmic nitrate reductase.